A 726-amino-acid chain; its full sequence is Sensory/regulatory protein RpfC (726 aa).

Helical transmembrane passes span 23 to 40, 52 to 72, 95 to 115, 128 to 148, and 152 to 172; these read NLIR…LGWR, TWLI…AILL, IMAI…WVTI, AATA…PYWK, and YLSW…DSLL. The Histidine kinase domain occupies 195–417; it reads NMSHEFRTPL…VFWFELPMAI (223 aa). Histidine 198 carries the post-translational modification Phosphohistidine; by autocatalysis. The Response regulatory domain occupies 463–581; that stretch reads RMLVADDHEA…KLLDTLADLA (119 aa). A 4-aspartylphosphate modification is found at aspartate 512. The HPt domain maps to 618–711; it reads GEEFERQFVR…KAGKDALDAR (94 aa). The residue at position 657 (histidine 657) is a Phosphohistidine.

In terms of assembly, at low DSF concentrations, interacts with RpfF. Autophosphorylated. Activation may require a sequential transfer of a phosphate group from a His in the primary transmitter domain, to an Asp in the receiver domain and to a His in the secondary transmitter domain.

It is found in the cell inner membrane. It carries out the reaction ATP + protein L-histidine = ADP + protein N-phospho-L-histidine.. Its activity is regulated as follows. Binding of DSF to the sensor region causes allosteric change, which facilitates RpfC autophosphorylation. Functionally, hybrid sensor kinase that regulates diverse biological functions through two distinct molecular mechanisms. At low cell density, the extracellular concentration of the diffusible signaling factor (DSF) is below a threshold, and unphosphorylated RpfC is involved in the negative regulation of DSF synthesis, via direct interaction with the DSF synthase RpfF. Interaction prevents synthesis of DSF, which remains at a basal level. This activity does not involve the phosphorelay mechanism and is not dependent on RpfG. Is also member of the two-component regulatory system RpfG/RpfC, which is involved in the perception and response to DSF, which is essential for cell-cell signaling. At high cell density, the level of extracellular DSF increases and binding of DSF to the sensor region of RpfC causes autophosphorylation of RpfC, which results in the release of RpfF and the activation of RpfG via a four-step phosphorelay. Activation of RpfG leads to the positive regulation of biofilm dispersal and the production of virulence factors. The protein is Sensory/regulatory protein RpfC (rpfC) of Xanthomonas campestris pv. campestris (strain ATCC 33913 / DSM 3586 / NCPPB 528 / LMG 568 / P 25).